We begin with the raw amino-acid sequence, 225 residues long: NAD(P)H-quinone oxidoreductase subunit K, chloroplastic (225 aa).

The [4Fe-4S] cluster site is built by cysteine 43, cysteine 44, cysteine 108, and cysteine 139.

Belongs to the complex I 20 kDa subunit family. NDH is composed of at least 16 different subunits, 5 of which are encoded in the nucleus. [4Fe-4S] cluster is required as a cofactor.

It localises to the plastid. It is found in the chloroplast thylakoid membrane. It catalyses the reaction a plastoquinone + NADH + (n+1) H(+)(in) = a plastoquinol + NAD(+) + n H(+)(out). It carries out the reaction a plastoquinone + NADPH + (n+1) H(+)(in) = a plastoquinol + NADP(+) + n H(+)(out). NDH shuttles electrons from NAD(P)H:plastoquinone, via FMN and iron-sulfur (Fe-S) centers, to quinones in the photosynthetic chain and possibly in a chloroplast respiratory chain. The immediate electron acceptor for the enzyme in this species is believed to be plastoquinone. Couples the redox reaction to proton translocation, and thus conserves the redox energy in a proton gradient. The chain is NAD(P)H-quinone oxidoreductase subunit K, chloroplastic from Amborella trichopoda.